Consider the following 676-residue polypeptide: Protein cereblon (676 aa).

A compositionally biased stretch (acidic residues) spans 1–11; that stretch reads MDDEETAEIDE. Disordered stretches follow at residues 1–78, 118–194, and 249–276; these read MDDE…TTAH, EDAG…AVPR, and DDAN…LDVD. Composition is skewed to low complexity over residues 12 to 33 and 125 to 139; these read TSSS…TETA and VPQN…TPPA. The segment covering 156–177 has biased composition (polar residues); sequence LVNNDSPSQASISSRHSGSDMS. The 229-residue stretch at 314–542 folds into the Lon N-terminal domain; sequence RMLIFMHQHI…IIGTTLKHES (229 aa). Residues 541–650 enclose the CULT domain; it reads ESLFYCRYCN…LAGSSVRIGK (110 aa). Zn(2+) is bound by residues C546, C549, C615, and C618.

Belongs to the CRBN family. As to quaternary structure, likely a component of a DCX (DDB1-CUL4-X-box) protein ligase complex. May interact with pic/DDB1. Ubiquitinated.

Its subcellular location is the nucleus. Its pathway is protein modification; protein ubiquitination. Its function is as follows. Substrate recognition component of a DCX (DDB1-CUL4-X-box) E3 protein ligase complex that mediates the ubiquitination and subsequent proteasomal degradation of target proteins. Has an essential role in mediating growth by negatively regulating insulin signaling. It also has a role in maintaining presynaptic function in the neuromuscular junction synapses of third-instar larvae. This Drosophila mojavensis (Fruit fly) protein is Protein cereblon.